Consider the following 88-residue polypeptide: Small ribosomal subunit protein bS18A (88 aa).

It belongs to the bacterial ribosomal protein bS18 family. In terms of assembly, part of the 30S ribosomal subunit. Forms a tight heterodimer with protein bS6.

In terms of biological role, binds as a heterodimer with protein bS6 to the central domain of the 16S rRNA, where it helps stabilize the platform of the 30S subunit. This is Small ribosomal subunit protein bS18A from Mycolicibacterium gilvum (strain PYR-GCK) (Mycobacterium gilvum (strain PYR-GCK)).